The following is a 137-amino-acid chain: Large-conductance mechanosensitive channel (137 aa).

2 helical membrane-spanning segments follow: residues 10–30 (FAMRGNVVDLAVGVIIGAAFG) and 76–96 (GVFIQNVFDFVIVAFAIFMAI).

The protein belongs to the MscL family. Homopentamer.

The protein resides in the cell inner membrane. Functionally, channel that opens in response to stretch forces in the membrane lipid bilayer. May participate in the regulation of osmotic pressure changes within the cell. The sequence is that of Large-conductance mechanosensitive channel from Enterobacter sp. (strain 638).